A 212-amino-acid polypeptide reads, in one-letter code: uncharacterized protein (212 aa).

Residue C52 is the Acyl-thioester intermediate of the active site. Residues H89 and D104 contribute to the active site.

Belongs to the arylamine N-acetyltransferase family.

This is an uncharacterized protein from Acanthamoeba polyphaga (Amoeba).